A 458-amino-acid polypeptide reads, in one-letter code: Tol-Pal system protein TolB (458 aa).

Residues 1 to 23 (MSSVIRKWALTALMAVSSTALFA) form the signal peptide.

The protein belongs to the TolB family. The Tol-Pal system is composed of five core proteins: the inner membrane proteins TolA, TolQ and TolR, the periplasmic protein TolB and the outer membrane protein Pal. They form a network linking the inner and outer membranes and the peptidoglycan layer.

Its subcellular location is the periplasm. Part of the Tol-Pal system, which plays a role in outer membrane invagination during cell division and is important for maintaining outer membrane integrity. This is Tol-Pal system protein TolB from Zymomonas mobilis subsp. mobilis (strain ATCC 31821 / ZM4 / CP4).